The chain runs to 416 residues: Phosphoribosylamine--glycine ligase (416 aa).

Residues 107–303 (KDVMACAGVP…LAGLLMAAAT (197 aa)) form the ATP-grasp domain. 133–184 (LAAFGAPYVVKDDGLAAGKGVVVTDDVEAARAHANACDRVVVEEFLDGPEVS) lines the ATP pocket. Residues Glu-273 and Asn-275 each coordinate Mg(2+).

It belongs to the GARS family. The cofactor is Mg(2+). It depends on Mn(2+) as a cofactor.

It catalyses the reaction 5-phospho-beta-D-ribosylamine + glycine + ATP = N(1)-(5-phospho-beta-D-ribosyl)glycinamide + ADP + phosphate + H(+). Its pathway is purine metabolism; IMP biosynthesis via de novo pathway; N(1)-(5-phospho-D-ribosyl)glycinamide from 5-phospho-alpha-D-ribose 1-diphosphate: step 2/2. The chain is Phosphoribosylamine--glycine ligase from Streptomyces coelicolor (strain ATCC BAA-471 / A3(2) / M145).